The primary structure comprises 1128 residues: Nck-associated protein 1 (1128 aa).

Serine 2 carries the N-acetylserine modification. The tract at residues 640-665 (AVNKKSKKQTGKKGEPEREKPGVESM) is disordered. Positions 651-665 (KKGEPEREKPGVESM) are enriched in basic and acidic residues. The chain crosses the membrane as a helical span at residues 995–1015 (IACLLMVFVAVSLPTLASNVM).

The protein belongs to the HEM-1/HEM-2 family. As to quaternary structure, component of the WAVE1 complex composed of ABI2, CYFIP1 or CYFIP2, BRK1, NCKAP1 and WASF1/WAVE1. Within the complex, a heterodimer containing NCKAP1 and CYFIP1 interacts with a heterotrimer formed by WAVE1, ABI2 and BRK1. Component of the WAVE2 complex composed of ABI1, CYFIP1/SRA1, NCKAP1/NAP1 and WASF2/WAVE2. CYFIP2 binds to activated RAC1 which causes the complex to dissociate, releasing activated WASF1. The complex can also be activated by NCK1. Associates preferentially with the first SH3 domain of NCK. Interacts with NYAP1, NYAP2 and MYO16. Interacts with TMEM132D. In terms of assembly, (Microbial infection) Interacts with human cytomegalovirus protein UL135. In terms of tissue distribution, expressed in all tissues examined except peripheral blood leukocytes, with highest expression in brain, heart, and skeletal muscle. Expressed in cells of various brain regions including Purkinje cells and dentate nucleus of the cerebellum, CA4 region and dentate gyrus of the hippocampus, and in frontal gray and white matter.

The protein localises to the cell membrane. It localises to the cell projection. Its subcellular location is the lamellipodium membrane. Its function is as follows. Part of the WAVE complex that regulates lamellipodia formation. The WAVE complex regulates actin filament reorganization via its interaction with the Arp2/3 complex. Actin remodeling activity is regulated by RAC1. As component of the WAVE1 complex, required for BDNF-NTRK2 endocytic trafficking and signaling from early endosomes. The chain is Nck-associated protein 1 (NCKAP1) from Homo sapiens (Human).